A 513-amino-acid polypeptide reads, in one-letter code: Na(+)/H(+) antiporter NhaB (513 aa).

The next 11 helical transmembrane spans lie at 21 to 41 (ITIVLFLIINPIIFFFISPFI), 88 to 108 (IIANFEVILLLIFMVAGIYFM), 119 to 139 (LLLSIRSKMVLSLAFCLSAAF), 143 to 163 (FLDALTVVAVIISVGMGFYGV), 208 to 228 (VGTALGGVMTMVGEPQNLIIA), 247 to 267 (LPVLICGLVTCFLVEKFGVFG), 303 to 323 (ALIGIWLVVGLAFHLAAVGII), 357 to 377 (LVVFFSVVAVIIDQHLFAPII), 389 to 409 (LALFYIFNGLLSAISDNVFVA), 447 to 467 (ATPNGQAAFLFLLTSSLAPLI), and 477 to 497 (MALPYTIVLSCIGLLAVEYIL).

It belongs to the NhaB Na(+)/H(+) (TC 2.A.34) antiporter family.

The protein localises to the cell inner membrane. The catalysed reaction is 2 Na(+)(in) + 3 H(+)(out) = 2 Na(+)(out) + 3 H(+)(in). Functionally, na(+)/H(+) antiporter that extrudes sodium in exchange for external protons. This is Na(+)/H(+) antiporter NhaB from Pasteurella multocida (strain Pm70).